The sequence spans 263 residues: P29 (263 aa).

The segment covering 30–39 has biased composition (basic and acidic residues); it reads VPEGLRDISK. The disordered stretch occupies residues 30–93; that stretch reads VPEGLRDISK…PKQKQLAPPI (64 aa). A compositionally biased stretch (polar residues) spans 52-64; sequence LSRASARPQQLQP.

The chain is P29 (p29) from Citrus sinensis (Sweet orange).